A 445-amino-acid polypeptide reads, in one-letter code: Tubulin beta-1 chain (445 aa).

The MREI motif signature appears at 1–4 (MREI). GTP-binding residues include glutamine 11, glutamate 69, serine 138, glycine 142, threonine 143, glycine 144, asparagine 204, and asparagine 226. Glutamate 69 is a binding site for Mg(2+). Residues 425-445 (YQDATAEEEGEFEEEGEEELA) form a disordered region. The segment covering 429-445 (TAEEEGEFEEEGEEELA) has biased composition (acidic residues). Residue glutamate 438 is modified to 5-glutamyl polyglutamate.

The protein belongs to the tubulin family. As to quaternary structure, dimer of alpha and beta chains. A typical microtubule is a hollow water-filled tube with an outer diameter of 25 nm and an inner diameter of 15 nM. Alpha-beta heterodimers associate head-to-tail to form protofilaments running lengthwise along the microtubule wall with the beta-tubulin subunit facing the microtubule plus end conferring a structural polarity. Microtubules usually have 13 protofilaments but different protofilament numbers can be found in some organisms and specialized cells. Mg(2+) is required as a cofactor. Some glutamate residues at the C-terminus are polyglycylated, resulting in polyglycine chains on the gamma-carboxyl group. Glycylation is mainly limited to tubulin incorporated into axonemes (cilia and flagella) whereas glutamylation is prevalent in neuronal cells, centrioles, axonemes, and the mitotic spindle. Both modifications can coexist on the same protein on adjacent residues, and lowering polyglycylation levels increases polyglutamylation, and reciprocally. The precise function of polyglycylation is still unclear. Post-translationally, some glutamate residues at the C-terminus are polyglutamylated, resulting in polyglutamate chains on the gamma-carboxyl group. Polyglutamylation plays a key role in microtubule severing by spastin (SPAST). SPAST preferentially recognizes and acts on microtubules decorated with short polyglutamate tails: severing activity by SPAST increases as the number of glutamates per tubulin rises from one to eight, but decreases beyond this glutamylation threshold.

It is found in the cytoplasm. The protein resides in the cytoskeleton. Tubulin is the major constituent of microtubules, a cylinder consisting of laterally associated linear protofilaments composed of alpha- and beta-tubulin heterodimers. Microtubules grow by the addition of GTP-tubulin dimers to the microtubule end, where a stabilizing cap forms. Below the cap, tubulin dimers are in GDP-bound state, owing to GTPase activity of alpha-tubulin. In Gadus morhua (Atlantic cod), this protein is Tubulin beta-1 chain.